The primary structure comprises 488 residues: UDP-N-acetylmuramoyl-L-alanyl-D-glutamate--2,6-diaminopimelate ligase (488 aa).

Residues Leu-24, Ser-26, and 41 to 43 (HQV) contribute to the UDP-N-acetyl-alpha-D-muramoyl-L-alanyl-D-glutamate site. 113-119 (GTNGKTT) is a binding site for ATP. Residues Asn-154, 155–156 (TT), Ser-182, Gln-188, and Arg-190 contribute to the UDP-N-acetyl-alpha-D-muramoyl-L-alanyl-D-glutamate site. N6-carboxylysine is present on Lys-222. Meso-2,6-diaminopimelate is bound by residues Arg-386, 410 to 413 (DNPR), Gly-461, and Glu-465. Positions 410 to 413 (DNPR) match the Meso-diaminopimelate recognition motif motif.

This sequence belongs to the MurCDEF family. MurE subfamily. It depends on Mg(2+) as a cofactor. Carboxylation is probably crucial for Mg(2+) binding and, consequently, for the gamma-phosphate positioning of ATP.

It localises to the cytoplasm. It catalyses the reaction UDP-N-acetyl-alpha-D-muramoyl-L-alanyl-D-glutamate + meso-2,6-diaminopimelate + ATP = UDP-N-acetyl-alpha-D-muramoyl-L-alanyl-gamma-D-glutamyl-meso-2,6-diaminopimelate + ADP + phosphate + H(+). Its pathway is cell wall biogenesis; peptidoglycan biosynthesis. Its function is as follows. Catalyzes the addition of meso-diaminopimelic acid to the nucleotide precursor UDP-N-acetylmuramoyl-L-alanyl-D-glutamate (UMAG) in the biosynthesis of bacterial cell-wall peptidoglycan. The chain is UDP-N-acetylmuramoyl-L-alanyl-D-glutamate--2,6-diaminopimelate ligase from Haemophilus influenzae (strain PittGG).